Here is a 183-residue protein sequence, read N- to C-terminus: uncharacterized protein (183 aa).

The signal sequence occupies residues 1–17 (MVLFILVLYTCIQDGNG).

This is an uncharacterized protein from Saccharomyces cerevisiae (strain ATCC 204508 / S288c) (Baker's yeast).